Here is a 339-residue protein sequence, read N- to C-terminus: UDP-N-acetylenolpyruvoylglucosamine reductase (339 aa).

The FAD-binding PCMH-type domain occupies 18-189 (GVEVKAKWFA…LRVRFALNRV (172 aa)). The active site involves Arg-166. Residue Ser-239 is the Proton donor of the active site. The active site involves Glu-335.

This sequence belongs to the MurB family. It depends on FAD as a cofactor.

The protein localises to the cytoplasm. The catalysed reaction is UDP-N-acetyl-alpha-D-muramate + NADP(+) = UDP-N-acetyl-3-O-(1-carboxyvinyl)-alpha-D-glucosamine + NADPH + H(+). It participates in cell wall biogenesis; peptidoglycan biosynthesis. Cell wall formation. The chain is UDP-N-acetylenolpyruvoylglucosamine reductase from Pseudomonas fluorescens (strain ATCC BAA-477 / NRRL B-23932 / Pf-5).